Here is a 505-residue protein sequence, read N- to C-terminus: Deoxyguanosinetriphosphate triphosphohydrolase (505 aa).

The HD domain occupies 66-273 (RLTHSMEVQQ…MEAADDISYC (208 aa)).

This sequence belongs to the dGTPase family. Type 1 subfamily. As to quaternary structure, homotetramer. Mg(2+) is required as a cofactor.

The catalysed reaction is dGTP + H2O = 2'-deoxyguanosine + triphosphate + H(+). In terms of biological role, dGTPase preferentially hydrolyzes dGTP over the other canonical NTPs. This chain is Deoxyguanosinetriphosphate triphosphohydrolase, found in Salmonella choleraesuis (strain SC-B67).